The following is a 273-amino-acid chain: HTH-type transcriptional regulator NimR (273 aa).

The HTH araC/xylS-type domain occupies P158–R258. DNA-binding regions (H-T-H motif) lie at residues G178–T199 and V225–L248.

Its function is as follows. Negatively regulates expression of the nimT operon and its own expression. Acts by binding to the nimR-nimT intergenic region. In Escherichia coli (strain K12), this protein is HTH-type transcriptional regulator NimR.